Reading from the N-terminus, the 730-residue chain is Probable G-protein coupled receptor 149 (730 aa).

The Extracellular segment spans residues 1-34 (MSFFLSNLTNDSRLWKVSHNSTDLMNSPETLTLS). N-linked (GlcNAc...) asparagine glycans are attached at residues asparagine 7, asparagine 10, and asparagine 20. A helical membrane pass occupies residues 35 to 55 (LFCLICLMTLVALVGSIFSLV). Over 56-68 (SLLTMQYRTVVSM) the chain is Cytoplasmic. The helical transmembrane segment at 69–89 (LVTSWSVDDLLSVLSVAIFMV) threads the bilayer. The Extracellular segment spans residues 90–108 (LQWPREAPGYFQSLCTTSA). Cysteine 104 and cysteine 181 are oxidised to a cystine. Residues 109 to 131 (LLYMCQGLSSNLKATLIVFYNFY) traverse the membrane as a helical segment. The Cytoplasmic portion of the chain corresponds to 132–148 (TMHRTVVSQSSSWRSGQ). Residues 149–169 (VLGVALTVWAVSLLLASLPLC) traverse the membrane as a helical segment. The Extracellular segment spans residues 170-188 (GWGVFVRTPWGCLTDCSSP). The helical transmembrane segment at 189-209 (YVLLLFAVYASAFGLLAVLSV) threads the bilayer. Topologically, residues 210–308 (PLTHQLLCSE…SFPVSLAQKR (99 aa)) are cytoplasmic. Residues 309 to 329 (FALILALTKVILWLPMMIHMV) traverse the membrane as a helical segment. At 330–340 (VKHVVGFQSLP) the chain is on the extracellular side. The helical transmembrane segment at 341 to 361 (VDMLSFLLTLLASTVTPVFVL) threads the bilayer. Residues 362–730 (SKRWAHLPCG…RKREAESKGN (369 aa)) lie on the Cytoplasmic side of the membrane.

Belongs to the G-protein coupled receptor 1 family. As to expression, expressed exclusively in brain and testis.

The protein localises to the cell membrane. Orphan receptor. This is Probable G-protein coupled receptor 149 (Gpr149) from Rattus norvegicus (Rat).